A 363-amino-acid chain; its full sequence is 1-aminocyclopropane-1-carboxylate oxidase homolog (363 aa).

The region spanning 212–312 (FHLFCSCNYY…MSITCFFGES (101 aa)) is the Fe2OG dioxygenase domain. Residues histidine 236, aspartate 238, and histidine 292 each coordinate Fe cation.

It belongs to the iron/ascorbate-dependent oxidoreductase family.

This is 1-aminocyclopropane-1-carboxylate oxidase homolog (ACO3) from Solanum lycopersicum (Tomato).